A 133-amino-acid polypeptide reads, in one-letter code: ATP synthase epsilon chain (133 aa).

The protein belongs to the ATPase epsilon chain family. F-type ATPases have 2 components, CF(1) - the catalytic core - and CF(0) - the membrane proton channel. CF(1) has five subunits: alpha(3), beta(3), gamma(1), delta(1), epsilon(1). CF(0) has three main subunits: a, b and c.

The protein resides in the cell membrane. Its function is as follows. Produces ATP from ADP in the presence of a proton gradient across the membrane. In Clostridium botulinum (strain Langeland / NCTC 10281 / Type F), this protein is ATP synthase epsilon chain.